A 167-amino-acid polypeptide reads, in one-letter code: Zymogen granule membrane protein 16 (167 aa).

An N-terminal signal peptide occupies residues 1–16 (MLTVALLALLCASASG). Residues 24 to 159 (SSYSGEYGGG…IDAIGLHWDV (136 aa)) form the Jacalin-type lectin domain.

The protein belongs to the jacalin lectin family. As to expression, highly expressed in liver. Detected at lower levels in colon, ileum and jejunum.

It is found in the secreted. It localises to the extracellular space. The protein localises to the extracellular matrix. Its subcellular location is the zymogen granule lumen. The protein resides in the golgi apparatus lumen. Functionally, may play a role in protein trafficking. May act as a linker molecule between the submembranous matrix on the luminal side of zymogen granule membrane (ZGM) and aggregated secretory proteins during granule formation in the TGN. The polypeptide is Zymogen granule membrane protein 16 (ZG16) (Homo sapiens (Human)).